Here is a 361-residue protein sequence, read N- to C-terminus: Cytochrome c peroxidase, mitochondrial (361 aa).

The transit peptide at 1-41 directs the protein to the mitochondrion; sequence MASAARSASRAFLRSSLRPAVRSSRFALPTQGLRVASRRGY. Histidine 122 functions as the Proton acceptor in the catalytic mechanism. Histidine 245 contacts heme b. The Tryptophan radical intermediate role is filled by tryptophan 261.

It belongs to the peroxidase family. Cytochrome c peroxidase subfamily. As to quaternary structure, forms a one-to-one complex with cytochrome c. Requires heme b as cofactor.

The protein localises to the mitochondrion matrix. It localises to the mitochondrion intermembrane space. The catalysed reaction is 2 Fe(II)-[cytochrome c] + H2O2 + 2 H(+) = 2 Fe(III)-[cytochrome c] + 2 H2O. Its function is as follows. Destroys radicals which are normally produced within the cells and which are toxic to biological systems. The sequence is that of Cytochrome c peroxidase, mitochondrial (ccp1) from Emericella nidulans (strain FGSC A4 / ATCC 38163 / CBS 112.46 / NRRL 194 / M139) (Aspergillus nidulans).